The following is a 270-amino-acid chain: Phthiotriol/phenolphthiotriol dimycocerosates methyltransferase (270 aa).

The protein belongs to the methyltransferase superfamily. Phthiotriol/phenolphthiotriol dimycocerosates methyltransferase family.

Catalyzes the methylation of the lipid moiety of the intermediate compounds phthiotriol and glycosylated phenolphthiotriol dimycoserosates to form phthiocerol dimycocerosates (DIM A) and glycosylated phenolphthiocerol dimycocerosates (PGL). This chain is Phthiotriol/phenolphthiotriol dimycocerosates methyltransferase, found in Mycobacterium bovis (strain ATCC BAA-935 / AF2122/97).